We begin with the raw amino-acid sequence, 441 residues long: Mitochondrial distribution and morphology protein 12 (441 aa).

The SMP-LTD domain maps to M1–V441. The disordered stretch occupies residues T180 to E289. Polar residues-rich tracts occupy residues S226–T245 and S253–G263.

Belongs to the MDM12 family. In terms of assembly, component of the ER-mitochondria encounter structure (ERMES) or MDM complex, composed of MMM1, MDM10, MDM12 and MDM34. An MMM1 homodimer associates with one molecule of MDM12 on each side in a pairwise head-to-tail manner, and the SMP-LTD domains of MMM1 and MDM12 generate a continuous hydrophobic tunnel for phospholipid trafficking.

It is found in the mitochondrion outer membrane. The protein resides in the endoplasmic reticulum membrane. Functionally, component of the ERMES/MDM complex, which serves as a molecular tether to connect the endoplasmic reticulum (ER) and mitochondria. Components of this complex are involved in the control of mitochondrial shape and protein biogenesis, and function in nonvesicular lipid trafficking between the ER and mitochondria. MDM12 is required for the interaction of the ER-resident membrane protein MMM1 and the outer mitochondrial membrane-resident beta-barrel protein MDM10. The MDM12-MMM1 subcomplex functions in the major beta-barrel assembly pathway that is responsible for biogenesis of all mitochondrial outer membrane beta-barrel proteins, and acts in a late step after the SAM complex. The MDM10-MDM12-MMM1 subcomplex further acts in the TOM40-specific pathway after the action of the MDM12-MMM1 complex. Essential for establishing and maintaining the structure of mitochondria and maintenance of mtDNA nucleoids. The sequence is that of Mitochondrial distribution and morphology protein 12 from Paracoccidioides brasiliensis (strain Pb18).